We begin with the raw amino-acid sequence, 266 residues long: Outer membrane protein OmpK (266 aa).

An N-terminal signal peptide occupies residues 1–20 (MRKSLLALSLLAATSAPVLA).

The protein belongs to the nucleoside-specific channel-forming outer membrane porin (Tsx) (TC 1.B.10) family.

The protein localises to the cell outer membrane. Functionally, serves as receptor for a broad-host-range vibriophage, KVP40. In Vibrio parahaemolyticus serotype O3:K6 (strain RIMD 2210633), this protein is Outer membrane protein OmpK (ompK).